We begin with the raw amino-acid sequence, 325 residues long: Phosphate acyltransferase (325 aa).

It belongs to the PlsX family. Homodimer. Probably interacts with PlsY.

The protein localises to the cytoplasm. It catalyses the reaction a fatty acyl-[ACP] + phosphate = an acyl phosphate + holo-[ACP]. It participates in lipid metabolism; phospholipid metabolism. Functionally, catalyzes the reversible formation of acyl-phosphate (acyl-PO(4)) from acyl-[acyl-carrier-protein] (acyl-ACP). This enzyme utilizes acyl-ACP as fatty acyl donor, but not acyl-CoA. In Staphylococcus epidermidis (strain ATCC 35984 / DSM 28319 / BCRC 17069 / CCUG 31568 / BM 3577 / RP62A), this protein is Phosphate acyltransferase.